Reading from the N-terminus, the 353-residue chain is Photosystem II D2 protein (353 aa).

Threonine 2 is subject to N-acetylthreonine. Threonine 2 carries the phosphothreonine modification. A helical membrane pass occupies residues 41–61 (CAYFAVGGWFTGTTFVTSWYT). A chlorophyll a-binding site is contributed by histidine 118. Residues 125-141 (GFMLRQFELARSVQLRP) form a helical membrane-spanning segment. 2 residues coordinate pheophytin a: glutamine 130 and asparagine 143. Residues 153 to 166 (VFVSVFLIYPLGQS) traverse the membrane as a helical segment. Histidine 198 serves as a coordination point for chlorophyll a. Residues 208-228 (AALLCAIHGATVENTLFEDGD) traverse the membrane as a helical segment. 2 residues coordinate a plastoquinone: histidine 215 and phenylalanine 262. Histidine 215 is a Fe cation binding site. A Fe cation-binding site is contributed by histidine 269. A helical transmembrane segment spans residues 279-295 (GLWMSALGVVGLALNLR).

It belongs to the reaction center PufL/M/PsbA/D family. As to quaternary structure, PSII is composed of 1 copy each of membrane proteins PsbA, PsbB, PsbC, PsbD, PsbE, PsbF, PsbH, PsbI, PsbJ, PsbK, PsbL, PsbM, PsbT, PsbX, PsbY, PsbZ, Psb30/Ycf12, at least 3 peripheral proteins of the oxygen-evolving complex and a large number of cofactors. It forms dimeric complexes. The D1/D2 heterodimer binds P680, chlorophylls that are the primary electron donor of PSII, and subsequent electron acceptors. It shares a non-heme iron and each subunit binds pheophytin, quinone, additional chlorophylls, carotenoids and lipids. There is also a Cl(-1) ion associated with D1 and D2, which is required for oxygen evolution. The PSII complex binds additional chlorophylls, carotenoids and specific lipids. is required as a cofactor.

Its subcellular location is the plastid. The protein localises to the chloroplast thylakoid membrane. It carries out the reaction 2 a plastoquinone + 4 hnu + 2 H2O = 2 a plastoquinol + O2. In terms of biological role, photosystem II (PSII) is a light-driven water:plastoquinone oxidoreductase that uses light energy to abstract electrons from H(2)O, generating O(2) and a proton gradient subsequently used for ATP formation. It consists of a core antenna complex that captures photons, and an electron transfer chain that converts photonic excitation into a charge separation. The D1/D2 (PsbA/PsbD) reaction center heterodimer binds P680, the primary electron donor of PSII as well as several subsequent electron acceptors. D2 is needed for assembly of a stable PSII complex. The polypeptide is Photosystem II D2 protein (Cucumis sativus (Cucumber)).